Consider the following 180-residue polypeptide: Putative adenylate kinase (180 aa).

Residues Gly10, Gly12, Lys13, Thr14, and Thr15 each contribute to the ATP site. The segment at 30 to 50 (SVKELALSRGIGERVSDEIEI) is NMP. Residues 99-109 (ARGYSKKKLAE) form an LID region. Positions 100 and 138 each coordinate ATP.

Belongs to the adenylate kinase family. AK6 subfamily. As to quaternary structure, interacts with uS11. Not a structural component of 40S pre-ribosomes, but transiently interacts with them by binding to uS11.

It catalyses the reaction AMP + ATP = 2 ADP. It carries out the reaction ATP + H2O = ADP + phosphate + H(+). In terms of biological role, broad-specificity nucleoside monophosphate (NMP) kinase that catalyzes the reversible transfer of the terminal phosphate group between nucleoside triphosphates and monophosphates. Also has ATPase activity. Involved in the late maturation steps of the 30S ribosomal particles, specifically 16S rRNA maturation. While NMP activity is not required for ribosome maturation, ATPase activity is. Associates transiently with small ribosomal subunit protein uS11. ATP hydrolysis breaks the interaction with uS11. May temporarily remove uS11 from the ribosome to enable a conformational change of the ribosomal RNA that is needed for the final maturation step of the small ribosomal subunit. This chain is Putative adenylate kinase, found in Thermococcus onnurineus (strain NA1).